The following is a 445-amino-acid chain: Glutamate--tRNA ligase 1 (445 aa).

The 'HIGH' region motif lies at 9 to 19 (PSPTGYLHVGN). The 'KMSKS' region motif lies at 238–242 (KISKR). Lys241 is a binding site for ATP.

The protein belongs to the class-I aminoacyl-tRNA synthetase family. Glutamate--tRNA ligase type 1 subfamily. Monomer.

Its subcellular location is the cytoplasm. The catalysed reaction is tRNA(Glu) + L-glutamate + ATP = L-glutamyl-tRNA(Glu) + AMP + diphosphate. Its function is as follows. Catalyzes the attachment of glutamate to tRNA(Glu) in a two-step reaction: glutamate is first activated by ATP to form Glu-AMP and then transferred to the acceptor end of tRNA(Glu). This chain is Glutamate--tRNA ligase 1, found in Ehrlichia ruminantium (strain Gardel).